A 179-amino-acid polypeptide reads, in one-letter code: MARFQEFYKEKVVPGLIEKFGYKSVMEVPRITKITLNMGLGEAIADKKIIENAVGDLTKIAGQKPVVTKARKAIAGFKIRQGYPIGAMVTLRGQAMYEFLDRFVTVALPRVRDFRGVSGRAFDGRGNYNIGVKEQIIFPEIDYDKIDALRGLNISITTTAKTDDEAKALLASFKFPFRN.

It belongs to the universal ribosomal protein uL5 family. Part of the 50S ribosomal subunit; part of the 5S rRNA/L5/L18/L25 subcomplex. Contacts the 5S rRNA and the P site tRNA. Forms a bridge to the 30S subunit in the 70S ribosome.

Functionally, this is one of the proteins that bind and probably mediate the attachment of the 5S RNA into the large ribosomal subunit, where it forms part of the central protuberance. In the 70S ribosome it contacts protein S13 of the 30S subunit (bridge B1b), connecting the 2 subunits; this bridge is implicated in subunit movement. Contacts the P site tRNA; the 5S rRNA and some of its associated proteins might help stabilize positioning of ribosome-bound tRNAs. This Burkholderia cenocepacia (strain HI2424) protein is Large ribosomal subunit protein uL5.